The sequence spans 494 residues: Guanosine-5'-triphosphate,3'-diphosphate pyrophosphatase (494 aa).

Belongs to the GppA/Ppx family. GppA subfamily.

It catalyses the reaction guanosine 3'-diphosphate 5'-triphosphate + H2O = guanosine 3',5'-bis(diphosphate) + phosphate + H(+). It participates in purine metabolism; ppGpp biosynthesis; ppGpp from GTP: step 2/2. In terms of biological role, catalyzes the conversion of pppGpp to ppGpp. Guanosine pentaphosphate (pppGpp) is a cytoplasmic signaling molecule which together with ppGpp controls the 'stringent response', an adaptive process that allows bacteria to respond to amino acid starvation, resulting in the coordinated regulation of numerous cellular activities. The polypeptide is Guanosine-5'-triphosphate,3'-diphosphate pyrophosphatase (Citrobacter koseri (strain ATCC BAA-895 / CDC 4225-83 / SGSC4696)).